The sequence spans 533 residues: Probable RNA-binding protein 46 (533 aa).

3 RRM domains span residues 61-139 (CEVF…VSLD), 141-223 (CRLF…WADP), and 236-308 (KVLY…LAKP). The tract at residues 338 to 362 (ESHSKSLGKPPTLPTRLNGQHSPSP) is disordered.

Interacts with YTHDC2, MEIOC, MOV10, CNOT6L, DDX4, UPF1 and PABPC1. Expressed in the testis and ovary (at protein level). Expressed in spermatogonia and spermatocytes in testis (at protein level).

The protein resides in the cytoplasm. Functionally, essential for male and female fertility, playing a crucial role in regulating germ cell development by ensuring the proper progression of meiosis prophase I. Regulates mitotic-to-meiotic transition in spermatogenesis by forming a complex with MEIOC and YTHDC2 which recognizes and down-regulates mitotic transcripts for a successful meiotic entry. Required for normal synaptonemal complex formation during meiosis, binding meiotic cohesin subunit mRNAs containing GCCUAU/GUUCGA motifs in their 3'UTRs regions and positively regulating their translation. Required for spermatogonial differentiation in both developing and adult testis. The sequence is that of Probable RNA-binding protein 46 from Mus musculus (Mouse).